The following is a 305-amino-acid chain: Uridylate cyclase (305 aa).

The Mn(2+) site is built by Asp-58 and Asp-102.

It belongs to the adenylyl cyclase class-4/guanylyl cyclase family. Pyrimidine cyclase subfamily. As to quaternary structure, homodimer. Mn(2+) is required as a cofactor.

Its subcellular location is the cytoplasm. The enzyme catalyses GTP = 3',5'-cyclic GMP + diphosphate. It catalyses the reaction UTP = 3',5'-cyclic UMP + diphosphate. In terms of biological role, pycsar (pyrimidine cyclase system for antiphage resistance) provides immunity against bacteriophage. The pyrimidine cyclase (PycC) synthesizes cyclic nucleotides in response to infection; these serve as specific second messenger signals. The signals activate the adjacent effector, leading to bacterial cell death and abortive phage infection. A clade D Pycsar system. Its function is as follows. The pyrimidine cyclase gene of a two-gene Pycsar system, generates cyclic UMP (cUMP) from UTP as well as cGMP from GTP to a lesser extent, has little to no activity on ATP or CTP. Expression of this and adjacent effector MePycTM (AC A0A1C5G2D0) probably confers resistance to bacteriophage. The genes are probably only expressed in response to bacteriophage infection. In Micromonospora echinofusca, this protein is Uridylate cyclase.